Reading from the N-terminus, the 148-residue chain is Glutamate mutase sigma subunit (148 aa).

In terms of domain architecture, B12-binding spans 3–140; the sequence is NPTIVIGVIG…KRDIERVMQS (138 aa). Adenosylcob(III)alamin-binding positions include 13-17, His16, 61-63, and 93-97; these read ADCHA, SSI, and NLVIG.

This sequence belongs to the methylaspartate mutase GlmS subunit family. In terms of assembly, heterotetramer composed of 2 epsilon subunits (GlmE) and 2 sigma subunits (GlmS). GlmE exists as a homodimer and GlmS as a monomer. Adenosylcob(III)alamin serves as cofactor.

It carries out the reaction (2S,3S)-3-methyl-L-aspartate = L-glutamate. It participates in amino-acid degradation; L-glutamate degradation via mesaconate pathway; acetate and pyruvate from L-glutamate: step 1/4. In terms of biological role, catalyzes the carbon skeleton rearrangement of L-glutamate to L-threo-3-methylaspartate ((2S,3S)-3-methylaspartate). The protein is Glutamate mutase sigma subunit of Yersinia enterocolitica serotype O:8 / biotype 1B (strain NCTC 13174 / 8081).